Here is a 79-residue protein sequence, read N- to C-terminus: DNA-directed RNA polymerase subunit omega (79 aa).

This sequence belongs to the RNA polymerase subunit omega family. In cyanobacteria the RNAP catalytic core is composed of 2 alpha, 1 beta, 1 beta', 1 gamma and 1 omega subunit. When a sigma factor is associated with the core the holoenzyme is formed, which can initiate transcription.

It carries out the reaction RNA(n) + a ribonucleoside 5'-triphosphate = RNA(n+1) + diphosphate. In terms of biological role, promotes RNA polymerase assembly. Latches the N- and C-terminal regions of the beta' subunit thereby facilitating its interaction with the beta and alpha subunits. The polypeptide is DNA-directed RNA polymerase subunit omega (Synechococcus sp. (strain JA-3-3Ab) (Cyanobacteria bacterium Yellowstone A-Prime)).